We begin with the raw amino-acid sequence, 301 residues long: tRNA dimethylallyltransferase (301 aa).

An ATP-binding site is contributed by 12-19; that stretch reads GPTASGKT. 14-19 lines the substrate pocket; sequence TASGKT. Residues 37–40 form an interaction with substrate tRNA region; that stretch reads DSLS.

The protein belongs to the IPP transferase family. In terms of assembly, monomer. Requires Mg(2+) as cofactor.

It catalyses the reaction adenosine(37) in tRNA + dimethylallyl diphosphate = N(6)-dimethylallyladenosine(37) in tRNA + diphosphate. In terms of biological role, catalyzes the transfer of a dimethylallyl group onto the adenine at position 37 in tRNAs that read codons beginning with uridine, leading to the formation of N6-(dimethylallyl)adenosine (i(6)A). This chain is tRNA dimethylallyltransferase, found in Sulfurovum sp. (strain NBC37-1).